The chain runs to 122 residues: Large ribosomal subunit protein uL14c (122 aa).

This sequence belongs to the universal ribosomal protein uL14 family. Part of the 50S ribosomal subunit.

The protein localises to the plastid. It localises to the chloroplast. Binds to 23S rRNA. The sequence is that of Large ribosomal subunit protein uL14c from Zygnema circumcarinatum (Green alga).